The primary structure comprises 268 residues: Undecaprenyl-diphosphatase (268 aa).

Helical transmembrane passes span 5–25 (SIISALVLGLIEGLTEFIPVS), 43–63 (GNTFAVLIQLGAILAILLVYF), 84–104 (FSVLLAFLPAALIGAAAHGFI), 107–127 (VLFETPMLICVVLIVGGIILY), 184–204 (AAEFSFFLAMPTMVGAFALDL), 213–233 (FDDVGLIAAGFIAAFIAGIFV), and 248–268 (PFAIWRILVGTAGLVGLWLLG).

This sequence belongs to the UppP family.

The protein resides in the cell inner membrane. It catalyses the reaction di-trans,octa-cis-undecaprenyl diphosphate + H2O = di-trans,octa-cis-undecaprenyl phosphate + phosphate + H(+). In terms of biological role, catalyzes the dephosphorylation of undecaprenyl diphosphate (UPP). Confers resistance to bacitracin. This is Undecaprenyl-diphosphatase from Rhizobium meliloti (strain 1021) (Ensifer meliloti).